A 131-amino-acid chain; its full sequence is Small ribosomal subunit protein uS11 (131 aa).

This sequence belongs to the universal ribosomal protein uS11 family. In terms of assembly, part of the 30S ribosomal subunit.

Functionally, located on the platform of the 30S subunit. The protein is Small ribosomal subunit protein uS11 of Methanospirillum hungatei JF-1 (strain ATCC 27890 / DSM 864 / NBRC 100397 / JF-1).